A 263-amino-acid polypeptide reads, in one-letter code: Phosphatidylglycerol--prolipoprotein diacylglyceryl transferase (263 aa).

4 helical membrane passes run 15 to 35, 52 to 72, 83 to 103, and 112 to 132; these read ISIH…VYLA, FILL…VIFQ, IFAI…GAAV, and AIAV…AQSI. Residue arginine 134 coordinates a 1,2-diacyl-sn-glycero-3-phospho-(1'-sn-glycerol). 3 consecutive transmembrane segments (helical) span residues 170 to 190, 200 to 220, and 230 to 250; these read VPTF…ILGL, GDVT…IEGM, and LRVS…LLYF.

The protein belongs to the Lgt family.

The protein localises to the cell membrane. The enzyme catalyses L-cysteinyl-[prolipoprotein] + a 1,2-diacyl-sn-glycero-3-phospho-(1'-sn-glycerol) = an S-1,2-diacyl-sn-glyceryl-L-cysteinyl-[prolipoprotein] + sn-glycerol 1-phosphate + H(+). It participates in protein modification; lipoprotein biosynthesis (diacylglyceryl transfer). Its function is as follows. Catalyzes the transfer of the diacylglyceryl group from phosphatidylglycerol to the sulfhydryl group of the N-terminal cysteine of a prolipoprotein, the first step in the formation of mature lipoproteins. This chain is Phosphatidylglycerol--prolipoprotein diacylglyceryl transferase, found in Streptococcus thermophilus (strain ATCC BAA-250 / LMG 18311).